A 1382-amino-acid polypeptide reads, in one-letter code: DNA-directed RNA polymerase subunit beta (1382 aa).

The protein belongs to the RNA polymerase beta chain family. The RNAP catalytic core consists of 2 alpha, 1 beta, 1 beta' and 1 omega subunit. When a sigma factor is associated with the core the holoenzyme is formed, which can initiate transcription.

The catalysed reaction is RNA(n) + a ribonucleoside 5'-triphosphate = RNA(n+1) + diphosphate. Functionally, DNA-dependent RNA polymerase catalyzes the transcription of DNA into RNA using the four ribonucleoside triphosphates as substrates. The polypeptide is DNA-directed RNA polymerase subunit beta (Anaplasma marginale (strain Florida)).